The primary structure comprises 450 residues: UDP-N-acetylmuramoylalanine--D-glutamate ligase (450 aa).

Position 119 to 125 (119 to 125 (GSNGKTT)) interacts with ATP.

The protein belongs to the MurCDEF family.

The protein resides in the cytoplasm. The enzyme catalyses UDP-N-acetyl-alpha-D-muramoyl-L-alanine + D-glutamate + ATP = UDP-N-acetyl-alpha-D-muramoyl-L-alanyl-D-glutamate + ADP + phosphate + H(+). The protein operates within cell wall biogenesis; peptidoglycan biosynthesis. Functionally, cell wall formation. Catalyzes the addition of glutamate to the nucleotide precursor UDP-N-acetylmuramoyl-L-alanine (UMA). The polypeptide is UDP-N-acetylmuramoylalanine--D-glutamate ligase (Streptococcus pneumoniae (strain JJA)).